The following is a 405-amino-acid chain: Deoxyguanosinetriphosphate triphosphohydrolase-like protein (405 aa).

Residues 75–219 form the HD domain; sequence RLTHTIEVAQ…AAIADDIAYN (145 aa).

This sequence belongs to the dGTPase family. Type 2 subfamily.

The polypeptide is Deoxyguanosinetriphosphate triphosphohydrolase-like protein (Rhizobium meliloti (strain 1021) (Ensifer meliloti)).